The chain runs to 563 residues: Putative cysteine ligase BshC (563 aa).

This sequence belongs to the BshC family.

The polypeptide is Putative cysteine ligase BshC (Chlorobium phaeobacteroides (strain BS1)).